Reading from the N-terminus, the 239-residue chain is Tumor necrosis factor ligand superfamily member 14 (239 aa).

Topologically, residues 1–37 (MESVVQPSVFVVDGQTDIPFRRLEQNHRRRRCGTVQV) are cytoplasmic. A helical; Signal-anchor for type II membrane protein membrane pass occupies residues 38–58 (SLALVLLLGAGLATQGWFLLR). The Extracellular segment spans residues 59 to 239 (LHQRLGDIVA…TRSYFGAFMV (181 aa)). In terms of domain architecture, THD spans 92–239 (PAAHLTGANA…TRSYFGAFMV (148 aa)). N-linked (GlcNAc...) asparagine glycosylation occurs at Asn-100. A disulfide bridge links Cys-152 with Cys-187. Asn-191 is a glycosylation site (N-linked (GlcNAc...) asparagine).

Belongs to the tumor necrosis factor family. Homotrimer. Interacts with TNFRSF14. In terms of processing, the soluble form derives from the membrane form by proteolytic processing.

It localises to the cell membrane. The protein resides in the secreted. Cytokine that binds to TNFRSF3/LTBR. Binding to the decoy receptor TNFRSF6B modulates its effects. Activates NFKB and stimulates the proliferation of T-cells. Acts as a ligand for TNFRSF14/HVEM. Upon binding to TNFRSF14/HVEM, delivers costimulatory signals to T cells, leading to T cell proliferation and IFNG production. The polypeptide is Tumor necrosis factor ligand superfamily member 14 (Tnfsf14) (Mus musculus (Mouse)).